The primary structure comprises 154 residues: Superoxide dismutase [Cu-Zn] (154 aa).

Cu cation-binding residues include His-47, His-49, and His-64. Cysteines 58 and 147 form a disulfide. Residues His-64, His-72, His-81, and Asp-84 each coordinate Zn(2+). His-121 contributes to the Cu cation binding site. Basic and acidic residues predominate over residues 125–137; it reads DDLGRSEHPESKK. The segment at 125–144 is disordered; the sequence is DDLGRSEHPESKKTGNAGAR. Arg-144 lines the substrate pocket.

This sequence belongs to the Cu-Zn superoxide dismutase family. In terms of assembly, homodimer. It depends on Cu cation as a cofactor. Zn(2+) is required as a cofactor.

The protein localises to the cytoplasm. It catalyses the reaction 2 superoxide + 2 H(+) = H2O2 + O2. In terms of biological role, destroys radicals which are normally produced within the cells and which are toxic to biological systems. The chain is Superoxide dismutase [Cu-Zn] (sodC) from Aspergillus oryzae (strain ATCC 42149 / RIB 40) (Yellow koji mold).